A 364-amino-acid polypeptide reads, in one-letter code: Dihydroorotate dehydrogenase (quinone) (364 aa).

Residues alanine 61–lysine 65 and threonine 85 each bind FMN. Lysine 65 lines the substrate pocket. Asparagine 110–phenylalanine 114 is a binding site for substrate. Residues asparagine 139 and asparagine 170 each contribute to the FMN site. Substrate is bound at residue asparagine 170. The active-site Nucleophile is the serine 173. Asparagine 175 contacts substrate. Residues lysine 214 and alanine 242 each contribute to the FMN site. Asparagine 243–threonine 244 contacts substrate. FMN contacts are provided by residues glycine 266, glycine 295, and tyrosine 316 to serine 317.

It belongs to the dihydroorotate dehydrogenase family. Type 2 subfamily. As to quaternary structure, monomer. The cofactor is FMN.

It localises to the cell membrane. It carries out the reaction (S)-dihydroorotate + a quinone = orotate + a quinol. Its pathway is pyrimidine metabolism; UMP biosynthesis via de novo pathway; orotate from (S)-dihydroorotate (quinone route): step 1/1. In terms of biological role, catalyzes the conversion of dihydroorotate to orotate with quinone as electron acceptor. This Rhodopseudomonas palustris (strain BisB5) protein is Dihydroorotate dehydrogenase (quinone).